The sequence spans 432 residues: Glutamyl-tRNA reductase (432 aa).

Substrate contacts are provided by residues 49–52 (TCNR), Ser-101, 106–108 (ESQ), and Gln-112. The active-site Nucleophile is Cys-50. 181 to 186 (GTGETI) serves as a coordination point for NADP(+).

The protein belongs to the glutamyl-tRNA reductase family. As to quaternary structure, homodimer.

The catalysed reaction is (S)-4-amino-5-oxopentanoate + tRNA(Glu) + NADP(+) = L-glutamyl-tRNA(Glu) + NADPH + H(+). It participates in porphyrin-containing compound metabolism; protoporphyrin-IX biosynthesis; 5-aminolevulinate from L-glutamyl-tRNA(Glu): step 1/2. Functionally, catalyzes the NADPH-dependent reduction of glutamyl-tRNA(Glu) to glutamate 1-semialdehyde (GSA). This chain is Glutamyl-tRNA reductase, found in Xylella fastidiosa (strain M12).